A 108-amino-acid polypeptide reads, in one-letter code: uncharacterized protein (108 aa).

Residues 1–12 (MSNQQKQLQLPS) show a composition bias toward polar residues. A disordered region spans residues 1-22 (MSNQQKQLQLPSASIKKPKEKQ).

This is an uncharacterized protein from Dictyostelium discoideum (Social amoeba).